We begin with the raw amino-acid sequence, 256 residues long: uncharacterized protein (256 aa).

It belongs to the methyltransferase superfamily.

It localises to the cytoplasm. Its subcellular location is the nucleus. Functionally, probable methyltransferase. This is an uncharacterized protein from Schizosaccharomyces pombe (strain 972 / ATCC 24843) (Fission yeast).